We begin with the raw amino-acid sequence, 346 residues long: N-acetyl-gamma-glutamyl-phosphate reductase (346 aa).

The active site involves C150.

The protein belongs to the NAGSA dehydrogenase family. Type 1 subfamily.

It is found in the cytoplasm. The catalysed reaction is N-acetyl-L-glutamate 5-semialdehyde + phosphate + NADP(+) = N-acetyl-L-glutamyl 5-phosphate + NADPH + H(+). It participates in amino-acid biosynthesis; L-arginine biosynthesis; N(2)-acetyl-L-ornithine from L-glutamate: step 3/4. Its function is as follows. Catalyzes the NADPH-dependent reduction of N-acetyl-5-glutamyl phosphate to yield N-acetyl-L-glutamate 5-semialdehyde. This Desulforudis audaxviator (strain MP104C) protein is N-acetyl-gamma-glutamyl-phosphate reductase.